The following is a 379-amino-acid chain: ATP phosphoribosyltransferase regulatory subunit (379 aa).

It belongs to the class-II aminoacyl-tRNA synthetase family. HisZ subfamily. Heteromultimer composed of HisG and HisZ subunits.

It localises to the cytoplasm. It functions in the pathway amino-acid biosynthesis; L-histidine biosynthesis; L-histidine from 5-phospho-alpha-D-ribose 1-diphosphate: step 1/9. Its function is as follows. Required for the first step of histidine biosynthesis. May allow the feedback regulation of ATP phosphoribosyltransferase activity by histidine. The chain is ATP phosphoribosyltransferase regulatory subunit from Caldanaerobacter subterraneus subsp. tengcongensis (strain DSM 15242 / JCM 11007 / NBRC 100824 / MB4) (Thermoanaerobacter tengcongensis).